We begin with the raw amino-acid sequence, 277 residues long: MAMLSFEKKYRVRGGTLIGGDLFDFWVGPFYVGIFGVMTVFFALIGIALIAWNTALGPTWNLWQISVNPPDAKYGLGFAPLAEGGIWQWVSICATGAFVTWALREVEICRKLGIGFHVPFAFSFAIFAYVTLVVIRPVLMGSWSYGFPYGIFTHLDWVSNTGYSYGQFHYNPAHMIAITFFFTTCLALALHGGLVLSALNPDRGEPVKSPEHENTVFRDLVGYSIGTIGIHRLGLFLALSAVFFSAVCMIISGPVLAEGGSWPDWWNWWRNLPIWNP.

The next 3 membrane-spanning stretches (helical) occupy residues 30–52 (FYVG…LIAW), 84–106 (GGIW…LREV), and 113–135 (GIGF…LVVI). The (7R,8Z)-bacteriochlorophyll b site is built by His-154 and His-174. Residues 173–195 (AHMIAITFFFTTCLALALHGGLV) traverse the membrane as a helical segment. His-191 contributes to the Fe cation binding site. Residue Phe-217 participates in a ubiquinone binding. Residue His-231 participates in Fe cation binding. The helical transmembrane segment at 233-255 (LGLFLALSAVFFSAVCMIISGPV) threads the bilayer.

Belongs to the reaction center PufL/M/PsbA/D family. Reaction center is composed of four bacteriochlorophylls, two bacteriopheophytins, two ubiquinones, one iron, and three highly hydrophobic polypeptide chains (designated L, M, and H).

Its subcellular location is the cellular chromatophore membrane. The reaction center is a membrane-bound complex that mediates the initial photochemical event in the electron transfer process of photosynthesis. This chain is Reaction center protein L chain (pufL), found in Rhodopseudomonas palustris (strain ATCC BAA-98 / CGA009).